Reading from the N-terminus, the 616-residue chain is Dihydroxy-acid dehydratase (616 aa).

D81 is a Mg(2+) binding site. [2Fe-2S] cluster is bound at residue C122. Mg(2+) is bound by residues D123 and K124. Position 124 is an N6-carboxylysine (K124). A [2Fe-2S] cluster-binding site is contributed by C195. E491 lines the Mg(2+) pocket. The Proton acceptor role is filled by S517.

This sequence belongs to the IlvD/Edd family. As to quaternary structure, homodimer. Requires [2Fe-2S] cluster as cofactor. The cofactor is Mg(2+).

It carries out the reaction (2R)-2,3-dihydroxy-3-methylbutanoate = 3-methyl-2-oxobutanoate + H2O. The catalysed reaction is (2R,3R)-2,3-dihydroxy-3-methylpentanoate = (S)-3-methyl-2-oxopentanoate + H2O. It participates in amino-acid biosynthesis; L-isoleucine biosynthesis; L-isoleucine from 2-oxobutanoate: step 3/4. The protein operates within amino-acid biosynthesis; L-valine biosynthesis; L-valine from pyruvate: step 3/4. Its function is as follows. Functions in the biosynthesis of branched-chain amino acids. Catalyzes the dehydration of (2R,3R)-2,3-dihydroxy-3-methylpentanoate (2,3-dihydroxy-3-methylvalerate) into 2-oxo-3-methylpentanoate (2-oxo-3-methylvalerate) and of (2R)-2,3-dihydroxy-3-methylbutanoate (2,3-dihydroxyisovalerate) into 2-oxo-3-methylbutanoate (2-oxoisovalerate), the penultimate precursor to L-isoleucine and L-valine, respectively. The polypeptide is Dihydroxy-acid dehydratase (Pectobacterium atrosepticum (strain SCRI 1043 / ATCC BAA-672) (Erwinia carotovora subsp. atroseptica)).